The following is a 1275-amino-acid chain: Membrane-associated guanylate kinase, WW and PDZ domain-containing protein 2 (1275 aa).

Positions 17–101 (ESVIGRNPEG…PLRLKCVKQG (85 aa)) constitute a PDZ 1 domain. In terms of domain architecture, Guanylate kinase-like spans 109–283 (RHYLNLRFQK…PVYSQPEELK (175 aa)). The segment at 203-305 (LPGATPSAEG…ENEDSDPLPD (103 aa)) is disordered. Residues 280 to 295 (EELKDQMDDTKPTKPE) are compositionally biased toward basic and acidic residues. WW domains are found at residues 301-334 (DPLPDNWEMAYTEKGEVYFIDHNTKTTSWLDPRL) and 347-380 (NELPYGWEKIDDPIYGTYYVDHINRRTQFENPVL). The tract at residues 301-380 (DPLPDNWEMA…RRTQFENPVL (80 aa)) is interaction with DDN. Phosphotyrosine is present on Y361. 2 consecutive PDZ domains span residues 425-509 (STTL…CRGY) and 604-682 (TLTI…HRGG). S685 is modified (phosphoserine). The disordered stretch occupies residues 698–740 (ENQGSPQTSLSAPAVPQNLPFPPALHRSSFPDSTEAFDPRKPD). The span at 699-708 (NQGSPQTSLS) shows a compositional bias: polar residues. The PDZ 4 domain maps to 777–859 (DVHLRRMESG…NGQVNLTVRR (83 aa)). Position 826 is a phosphotyrosine (Y826). The disordered stretch occupies residues 868-912 (CPENGRSPGSVSTHHSSPRSDYATYSNSNHAAPSSNASPPEGFAS). S883 and S884 each carry phosphoserine. The segment covering 893-907 (SNSNHAAPSSNASPP) has biased composition (low complexity). Positions 919–1009 (DVVIHRKENE…SVTLRIIPQE (91 aa)) constitute a PDZ 5 domain. A compositionally biased stretch (polar residues) spans 1010-1040 (ELNSPTSAPSSEKQSPMAQQHSPLAQQSPLA). Residues 1010–1128 (ELNSPTSAPS…PDTRQYPLSD (119 aa)) are disordered. At S1013 the chain carries Phosphoserine. A compositionally biased stretch (basic and acidic residues) spans 1067–1083 (NSYRSEVKARQDVKPDI). The 83-residue stretch at 1139–1221 (TVDMEKGAKG…RVRLLLKRGT (83 aa)) folds into the PDZ 6 domain.

The protein belongs to the MAGUK family. Interacts (via its WW domains) with DRPLA. Interacts (via its second PDZ domain) with PTEN (via unphosphorylated C-terminus); this interaction diminishes the degradation rate of PTEN. Interacts (via guanylate kinase domain) with DLGAP1. Interacts (via the PDZ domains) with GRIN2A, GRID2 and NLGN1. Interacts with CTNND2, CTNNB1 and MAGUIN-1. Interacts with ACVR2A, SMAD2 and SMAD3. Part of a complex consisting of MAGI2/ARIP1, ACVR2A, ACVR1B and SMAD3. May interact with HTR2A. Interacts with RAPGEF2. Identified in a complex with ACTN4, CASK, IQGAP1, NPHS1, SPTAN1 and SPTBN1. Interacts with DDN. Found in a complex, at least composed of KIDINS220, MAGI2, NTRK1 and RAPGEF2; the complex is mainly formed at late endosomes in a NGF-dependent manner. Interacts with RAPGEF2; the interaction occurs before or after nerve growth factor (NGF) stimulation. Interacts (via PDZ domain) with KIDINS220 (via C-terminal domain). Interacts with IGSF9 and HTR4. Interacts with DLL1. Found in a complex with IGSF9B and NLGN2; the interaction with IGSF9B is mediated via the PDZ 5 and PDZ 6 domains, while the interaction with NLGN2 is mediated via the WW1, WW2 and PDZ2 domains. Interacts (via PDZ 6 domain) with USH1G (via SAM domain); the interaction is triggered by phosphorylation of USH1G by CK2 and negatively regulates MAGI2-mediated endocytosis. As to expression, expressed throughout the retina except in the nuclear layers and the photoreceptor outer segments (at protein level). Highest retinal expression is observed in the outer plexiform layer, the outer limiting membrane and the inner segment of photoreceptor cells (at protein level). Expressed in brain.

Its subcellular location is the cytoplasm. The protein localises to the late endosome. The protein resides in the synapse. It is found in the synaptosome. It localises to the cell membrane. Its subcellular location is the cytoskeleton. The protein localises to the microtubule organizing center. The protein resides in the centrosome. It is found in the cell projection. It localises to the cilium. Its subcellular location is the centriole. The protein localises to the photoreceptor inner segment. The protein resides in the photoreceptor outer segment. Functionally, seems to act as a scaffold molecule at synaptic junctions by assembling neurotransmitter receptors and cell adhesion proteins. Plays a role in nerve growth factor (NGF)-induced recruitment of RAPGEF2 to late endosomes and neurite outgrowth. May play a role in regulating activin-mediated signaling in neuronal cells. Enhances the ability of PTEN to suppress AKT1 activation. Plays a role in receptor-mediated clathrin-dependent endocytosis which is required for ciliogenesis. The sequence is that of Membrane-associated guanylate kinase, WW and PDZ domain-containing protein 2 (Magi2) from Mus musculus (Mouse).